A 229-amino-acid polypeptide reads, in one-letter code: MAKLTKKQKEAVSKIEKNKLYSLKDASVLIKQIASAKFDESVDIAVKLGVDPRKANQMVRGVVALPHGTGKNMRVLALVTPDKEAEAKEAGADFVGLDDYLQKIKDGWTDVDVIVTMPAVMGKLGPLGRILGPRGLMPNPKTGTVTMEIGKAVTEIKAGKIDFKVDKTGIVHAGIGRISFDADKIMENAHEIIQTLIKLKPTAAKGTYIKSIHLTSTMSPAIALDPKAV.

It belongs to the universal ribosomal protein uL1 family. As to quaternary structure, part of the 50S ribosomal subunit.

Functionally, binds directly to 23S rRNA. The L1 stalk is quite mobile in the ribosome, and is involved in E site tRNA release. In terms of biological role, protein L1 is also a translational repressor protein, it controls the translation of the L11 operon by binding to its mRNA. The sequence is that of Large ribosomal subunit protein uL1 from Flavobacterium psychrophilum (strain ATCC 49511 / DSM 21280 / CIP 103535 / JIP02/86).